The chain runs to 479 residues: Glutamate--tRNA ligase (479 aa).

The 'HIGH' region motif lies at 9–19; sequence PSPTGLFHIGT. The short motif at 248 to 252 is the 'KMSKS' region element; that stretch reads KLSKR. Residue Lys251 coordinates ATP.

It belongs to the class-I aminoacyl-tRNA synthetase family. Glutamate--tRNA ligase type 1 subfamily. Monomer.

Its subcellular location is the cytoplasm. It catalyses the reaction tRNA(Glu) + L-glutamate + ATP = L-glutamyl-tRNA(Glu) + AMP + diphosphate. Functionally, catalyzes the attachment of glutamate to tRNA(Glu) in a two-step reaction: glutamate is first activated by ATP to form Glu-AMP and then transferred to the acceptor end of tRNA(Glu). The sequence is that of Glutamate--tRNA ligase from Prochlorococcus marinus (strain MIT 9312).